Here is a 292-residue protein sequence, read N- to C-terminus: Universal stress protein Mb2346c (292 aa).

This sequence belongs to the universal stress protein A family.

The chain is Universal stress protein Mb2346c from Mycobacterium bovis (strain ATCC BAA-935 / AF2122/97).